We begin with the raw amino-acid sequence, 686 residues long: Methionine--tRNA ligase (686 aa).

Positions 15-25 (PYANGSIHLGH) match the 'HIGH' region motif. Zn(2+) contacts are provided by Cys146, Cys149, Cys159, and Cys162. The 'KMSKS' region motif lies at 332-336 (KMSKS). Lys335 provides a ligand contact to ATP. The interval 550–571 (AAAEAAAKEKAEAEKEQASQTE) is disordered. Residues 585–686 (AFSAVDMRIA…EGAQPGMRVM (102 aa)) form the tRNA-binding domain.

The protein belongs to the class-I aminoacyl-tRNA synthetase family. MetG type 1 subfamily. As to quaternary structure, homodimer. The cofactor is Zn(2+).

The protein resides in the cytoplasm. The enzyme catalyses tRNA(Met) + L-methionine + ATP = L-methionyl-tRNA(Met) + AMP + diphosphate. Is required not only for elongation of protein synthesis but also for the initiation of all mRNA translation through initiator tRNA(fMet) aminoacylation. This is Methionine--tRNA ligase from Vibrio atlanticus (strain LGP32) (Vibrio splendidus (strain Mel32)).